The chain runs to 336 residues: Dihydroorotate dehydrogenase (quinone) (336 aa).

Residues 62–66 and T86 each bind FMN; that span reads AGLDK. A substrate-binding site is contributed by K66. 111–115 contributes to the substrate binding site; that stretch reads NRMGF. FMN contacts are provided by N139 and N172. N172 contacts substrate. S175 acts as the Nucleophile in catalysis. N177 provides a ligand contact to substrate. FMN contacts are provided by K217 and T245. 246–247 lines the substrate pocket; that stretch reads NT. FMN is bound by residues G268, G297, and 318–319; that span reads YS.

The protein belongs to the dihydroorotate dehydrogenase family. Type 2 subfamily. In terms of assembly, monomer. FMN serves as cofactor.

It is found in the cell membrane. It carries out the reaction (S)-dihydroorotate + a quinone = orotate + a quinol. Its pathway is pyrimidine metabolism; UMP biosynthesis via de novo pathway; orotate from (S)-dihydroorotate (quinone route): step 1/1. In terms of biological role, catalyzes the conversion of dihydroorotate to orotate with quinone as electron acceptor. This Enterobacter sp. (strain 638) protein is Dihydroorotate dehydrogenase (quinone).